The primary structure comprises 467 residues: 3-isopropylmalate dehydratase large subunit (467 aa).

Residues Cys349, Cys409, and Cys412 each coordinate [4Fe-4S] cluster.

This sequence belongs to the aconitase/IPM isomerase family. LeuC type 1 subfamily. As to quaternary structure, heterodimer of LeuC and LeuD. Requires [4Fe-4S] cluster as cofactor.

It catalyses the reaction (2R,3S)-3-isopropylmalate = (2S)-2-isopropylmalate. It participates in amino-acid biosynthesis; L-leucine biosynthesis; L-leucine from 3-methyl-2-oxobutanoate: step 2/4. Functionally, catalyzes the isomerization between 2-isopropylmalate and 3-isopropylmalate, via the formation of 2-isopropylmaleate. In Ruegeria sp. (strain TM1040) (Silicibacter sp.), this protein is 3-isopropylmalate dehydratase large subunit.